A 350-amino-acid polypeptide reads, in one-letter code: Probable dual-specificity RNA methyltransferase RlmN (350 aa).

Glutamate 98 functions as the Proton acceptor in the catalytic mechanism. One can recognise a Radical SAM core domain in the interval 104-334; that stretch reads HTYGNSVCVS…VTVRRELGGD (231 aa). An intrachain disulfide couples cysteine 111 to cysteine 339. The [4Fe-4S] cluster site is built by cysteine 118, cysteine 122, and cysteine 125. Residues 165–166, serine 197, 220–222, and asparagine 296 each bind S-adenosyl-L-methionine; these read GE and SLH. The S-methylcysteine intermediate role is filled by cysteine 339.

This sequence belongs to the radical SAM superfamily. RlmN family. Requires [4Fe-4S] cluster as cofactor.

It localises to the cytoplasm. It catalyses the reaction adenosine(2503) in 23S rRNA + 2 reduced [2Fe-2S]-[ferredoxin] + 2 S-adenosyl-L-methionine = 2-methyladenosine(2503) in 23S rRNA + 5'-deoxyadenosine + L-methionine + 2 oxidized [2Fe-2S]-[ferredoxin] + S-adenosyl-L-homocysteine. It carries out the reaction adenosine(37) in tRNA + 2 reduced [2Fe-2S]-[ferredoxin] + 2 S-adenosyl-L-methionine = 2-methyladenosine(37) in tRNA + 5'-deoxyadenosine + L-methionine + 2 oxidized [2Fe-2S]-[ferredoxin] + S-adenosyl-L-homocysteine. Specifically methylates position 2 of adenine 2503 in 23S rRNA and position 2 of adenine 37 in tRNAs. This chain is Probable dual-specificity RNA methyltransferase RlmN, found in Desulforamulus reducens (strain ATCC BAA-1160 / DSM 100696 / MI-1) (Desulfotomaculum reducens).